The primary structure comprises 249 residues: MPLLEFEPLQEGVLIKRYKRFLADIELSNGEVVTAHCANTGPMTGVLIPGQRVRLRHAPSPKRKLAWTWEQAEVPGADGQPCWAGINTALPNRLIRATIEAGCLSEQLGAISNIRAEVAYGTNRRSRIDLLLTPGESNPDQRLIYLEVKNTTWTDGTTALFPDTVTERGQKHLIELMGVLPEARAVLVPCLSRPDVMDFAPGDEADPRYGSLFRDALEAGVEVLPCCFRYQSNEISWQGLRPLKKFQNL.

It belongs to the SfsA family.

The protein is Sugar fermentation stimulation protein homolog of Synechococcus sp. (strain CC9902).